We begin with the raw amino-acid sequence, 334 residues long: N-chimaerin (334 aa).

Positions 1–10 are enriched in polar residues; that stretch reads MPSKESWSGR. Residues 1–22 form a disordered region; it reads MPSKESWSGRKTNRATVHKSKQ. T67 is subject to Phosphothreonine. The Phorbol-ester/DAG-type zinc-finger motif lies at 80–130; that stretch reads VHNFKVHTFRGPHWCEYCANFMWGLIAQGVKCADCGLNVHKQCSKMVPNDC. One can recognise a Rho-GAP domain in the interval 143–334; sequence CDLTTLVKAH…LLIKNEDILF (192 aa). T215 carries the post-translational modification Phosphothreonine.

Interacts with EPHA4; effector of EPHA4 in axon guidance linking EPHA4 activation to RAC1 regulation. Phosphorylated. Phosphorylation is EPHA4 kinase activity-dependent. As to expression, in neurons in brain regions that are involved in learning and memory processes.

In terms of biological role, GTPase-activating protein for p21-rac and a phorbol ester receptor. Involved in the assembly of neuronal locomotor circuits as a direct effector of EPHA4 in axon guidance. The chain is N-chimaerin (Chn1) from Rattus norvegicus (Rat).